The following is a 358-amino-acid chain: tRNA pseudouridine synthase B (358 aa).

Positions 1–50 (MTTPDAAIDSKISDSNGADKNKSAADDNAFNAPGRKRHHNNQPRRDKRDV) are disordered. Asp87 functions as the Nucleophile in the catalytic mechanism.

Belongs to the pseudouridine synthase TruB family. Type 1 subfamily.

It catalyses the reaction uridine(55) in tRNA = pseudouridine(55) in tRNA. In terms of biological role, responsible for synthesis of pseudouridine from uracil-55 in the psi GC loop of transfer RNAs. The chain is tRNA pseudouridine synthase B from Nitrobacter winogradskyi (strain ATCC 25391 / DSM 10237 / CIP 104748 / NCIMB 11846 / Nb-255).